A 360-amino-acid polypeptide reads, in one-letter code: sn-glycerol-3-phosphate import ATP-binding protein UgpC (360 aa).

Positions 4–235 constitute an ABC transporter domain; that stretch reads LSLKGVRKSY…PATTFVASFI (232 aa). 37–44 is an ATP binding site; sequence GPSGCGKS.

The protein belongs to the ABC transporter superfamily. sn-glycerol-3-phosphate importer (TC 3.A.1.1.3) family. In terms of assembly, the complex is composed of two ATP-binding proteins (UgpC), two transmembrane proteins (UgpA and UgpE) and a solute-binding protein (UgpB).

The protein localises to the cell inner membrane. It carries out the reaction sn-glycerol 3-phosphate(out) + ATP + H2O = sn-glycerol 3-phosphate(in) + ADP + phosphate + H(+). Its function is as follows. Part of the ABC transporter complex UgpBAEC involved in sn-glycerol-3-phosphate (G3P) import. Responsible for energy coupling to the transport system. The protein is sn-glycerol-3-phosphate import ATP-binding protein UgpC of Burkholderia pseudomallei (strain K96243).